We begin with the raw amino-acid sequence, 656 residues long: Protein arginine N-methyltransferase 7 (656 aa).

SAM-dependent MTase PRMT-type domains lie at 12–338 (EREW…FSIW) and 343–656 (GKDS…QSGN).

It belongs to the class I-like SAM-binding methyltransferase superfamily. Protein arginine N-methyltransferase family. PRMT7 subfamily.

Arginine methyltransferase that can both catalyze the formation of omega-N monomethylarginine (MMA) and symmetrical dimethylarginine (sDMA). In Caenorhabditis briggsae, this protein is Protein arginine N-methyltransferase 7 (prmt-7).